The following is a 769-amino-acid chain: Integrin beta-2 (769 aa).

An N-terminal signal peptide occupies residues 1 to 22 (MLCRCSPLLLLVGLLTLRSALS). Residue Gln23 is modified to Pyrrolidone carboxylic acid. At 23–700 (QECAKYKVST…ETRECVKGPN (678 aa)) the chain is on the extracellular side. The 51-residue stretch at 24-74 (ECAKYKVSTCRDCIESGPGCAWCQKLNFSGQGEPDSVRCDTREQLLAKGCV) folds into the PSI domain. 28 disulfide bridges follow: Cys25–Cys43, Cys33–Cys447, Cys36–Cys62, Cys46–Cys73, Cys191–Cys198, Cys246–Cys286, Cys386–Cys400, Cys420–Cys445, Cys449–Cys467, Cys459–Cys470, Cys472–Cys481, Cys483–Cys514, Cys497–Cys512, Cys506–Cys517, Cys519–Cys534, Cys536–Cys559, Cys541–Cys557, Cys549–Cys562, Cys564–Cys573, Cys575–Cys598, Cys582–Cys596, Cys590–Cys601, Cys603–Cys612, Cys615–Cys618, Cys622–Cys662, Cys628–Cys647, Cys631–Cys643, and Cys670–Cys695. 2 N-linked (GlcNAc...) asparagine glycosylation sites follow: Asn50 and Asn116. In terms of domain architecture, VWFA spans 124–363 (GYPIDLYYLM…ELIKNAYNKL (240 aa)). Positions 136 and 138 each coordinate Mg(2+). Ca(2+) contacts are provided by Ser138, Asp141, Asp142, and Asp173. Ca(2+)-binding residues include Asn229, Asp231, Pro233, and Glu234. Residue Glu234 participates in Mg(2+) binding. Asn254 carries an N-linked (GlcNAc...) asparagine glycan. Ca(2+) contacts are provided by Asp264 and Glu347. Positions 397 to 399 (RGD) match the Cell attachment site motif. I-EGF domains lie at 449 to 482 (CGDSSKERTLCGNKGSMECGVCRCDAGYIGKHCE), 483 to 535 (CQTQ…QFCE), 536 to 574 (CDNMNCERFDGQVCGGEKRGLCFCSTCRCQEGFEGSACQ), and 575 to 613 (CLKSTQGCLNLQGVECSGRGRCRCNVCQCDFGYQPPLCT). N-linked (GlcNAc...) asparagine glycosylation occurs at Asn501. The N-linked (GlcNAc...) asparagine glycan is linked to Asn642. A helical membrane pass occupies residues 701-723 (IAAIVGGTVGGVVLVGIFLLVIW). Residues 724-769 (KVLTHLSDLREYKRFEKEKLKSQWNNDNPLFKSATTTVMNPKFAER) lie on the Cytoplasmic side of the membrane. Residues Ser745 and Ser756 each carry the phosphoserine modification. Residues Thr758 and Thr760 each carry the phosphothreonine modification.

Belongs to the integrin beta chain family. In terms of assembly, heterodimer of an alpha and a beta subunit. The ITGB2 beta subunit associates with the ITGAL, ITGAM, ITGAX or ITGAD alpha subunits. Found in a complex with CD177 and ITGAM/CD11b. Interacts with FGR. Interacts with COPS5 and RANBP9. Interacts with FLNA (via filamin repeats 4, 9, 12, 17, 19, 21, and 23). Interacts with THBD. In terms of processing, both Ser-745 and Ser-756 become phosphorylated when T-cells are exposed to phorbol esters. Phosphorylation on Thr-758 (but not on Ser-756) allows interaction with 14-3-3 proteins.

It is found in the cell membrane. It localises to the membrane raft. Its function is as follows. Integrin ITGAL/ITGB2 is a receptor for ICAM1, ICAM2, ICAM3 and ICAM4. Integrin ITGAL/ITGB2 is also a receptor for the secreted form of ubiquitin-like protein ISG15; the interaction is mediated by ITGAL. Integrins ITGAM/ITGB2 and ITGAX/ITGB2 are receptors for the iC3b fragment of the third complement component and for fibrinogen. Integrin ITGAX/ITGB2 recognizes the sequence G-P-R in fibrinogen alpha-chain. Integrin ITGAM/ITGB2 recognizes P1 and P2 peptides of fibrinogen gamma chain. Integrin ITGAM/ITGB2 is also a receptor for factor X. Integrin ITGAD/ITGB2 is a receptor for ICAM3 and VCAM1. Contributes to natural killer cell cytotoxicity. Involved in leukocyte adhesion and transmigration of leukocytes including T-cells and neutrophils. Triggers neutrophil transmigration during lung injury through PTK2B/PYK2-mediated activation. Integrin alpha-L/beta-2 in association with ICAM3, contributes to apoptotic neutrophil phagocytosis by macrophages. This Sus scrofa (Pig) protein is Integrin beta-2 (ITGB2).